The primary structure comprises 290 residues: Bifunctional protein FolD (290 aa).

Residues 169-171 (GAS), Ile-194, and Ile-235 each bind NADP(+).

This sequence belongs to the tetrahydrofolate dehydrogenase/cyclohydrolase family. As to quaternary structure, homodimer.

The catalysed reaction is (6R)-5,10-methylene-5,6,7,8-tetrahydrofolate + NADP(+) = (6R)-5,10-methenyltetrahydrofolate + NADPH. It carries out the reaction (6R)-5,10-methenyltetrahydrofolate + H2O = (6R)-10-formyltetrahydrofolate + H(+). Its pathway is one-carbon metabolism; tetrahydrofolate interconversion. Functionally, catalyzes the oxidation of 5,10-methylenetetrahydrofolate to 5,10-methenyltetrahydrofolate and then the hydrolysis of 5,10-methenyltetrahydrofolate to 10-formyltetrahydrofolate. In Helicobacter pylori (strain HPAG1), this protein is Bifunctional protein FolD.